The following is a 506-amino-acid chain: Trans-cinnamate 4-monooxygenase C4H1 (506 aa).

2 consecutive short sequence motifs (nuclear localization signal) follow at residues 161-168 and 247-254; these read VKKMPESA and QRRLQLFK. Heme is bound at residue cysteine 448.

Belongs to the cytochrome P450 family. The cofactor is heme.

Its subcellular location is the nucleus. It carries out the reaction (E)-cinnamate + reduced [NADPH--hemoprotein reductase] + O2 = (E)-4-coumarate + oxidized [NADPH--hemoprotein reductase] + H2O + H(+). The protein operates within phenylpropanoid metabolism; trans-4-coumarate biosynthesis; trans-4-coumarate from trans-cinnamate: step 1/1. In terms of biological role, component of the floral volatile benzenoid/phenylpropanoid (FVBP) biosynthetic pathway that controls carbon flux to pigments essential for pollination or UV protection, to numerous pytoalexins synthesized by plants when challenged by pathogens, and to lignins. This Petunia hybrida (Petunia) protein is Trans-cinnamate 4-monooxygenase C4H1.